Reading from the N-terminus, the 212-residue chain is MGTEFNGLFDEWAHTYDSFVQGEDIQYKEVFAHYEDILEDVVNKSFGNVLEFGVGTGNLTNKLLLAGRTVYGIEPSREMRMIAKEKLPKEFSITEGDFLSFEVPNSIDTIVSTYAFHHLTDDEKNVAIAKYSQLLNKGGKIVFADTIFADQDAYDKTVEAAKQRGFHELANDLQTEYYTRIPIMQTIFENNGFHVTFTRLNHFVWVMEATKQ.

Residues glycine 53, glutamate 74, and aspartate 97 each coordinate S-adenosyl-L-methionine.

The protein belongs to the methyltransferase superfamily. YrrT family.

In terms of biological role, could be a S-adenosyl-L-methionine-dependent methyltransferase. This is an uncharacterized protein from Bacillus cereus (strain ATCC 10987 / NRS 248).